The sequence spans 338 residues: mRNA decay activator protein ZFP36L1 (338 aa).

A necessary and sufficient for the association with mRNA decay enzymes and mRNA decay activation region spans residues 1-111; that stretch reads MTTTLVSATI…QKQPGSGQVN (111 aa). S54 bears the Phosphoserine; by MAPKAPK2 mark. S90 carries the phosphoserine; by PKB/AKT1 modification. Position 92 is a phosphoserine; by PKB/AKT1 and MAPKAPK2 (S92). The disordered stretch occupies residues 93–113; that stretch reads EGGERLLPTQKQPGSGQVNSS. Over residues 101–113 the composition is skewed to polar residues; it reads TQKQPGSGQVNSS. 2 consecutive C3H1-type zinc fingers follow at residues 114–142 and 152–180; these read RYKTELCRPFEENGACKYGDKCQFAHGIH and KYKTELCRTFHTIGFCPYGPRCHFIHNAE. Residues 185-338 form a necessary for mRNA decay activation region; that stretch reads LAGGRDLSAD…IFSRLSISDD (154 aa). Residue S203 is modified to Phosphoserine; by PKB/AKT1 and MAPKAPK2. The tract at residues 273–338 is disordered; the sequence is SPTTFLFRPM…IFSRLSISDD (66 aa). Over residues 305–318 the composition is skewed to low complexity; the sequence is YLSSSSSSHSGSDS. S318 is subject to Phosphoserine. Phosphoserine; by RPS6KA1 is present on S334.

In terms of assembly, associates with the cytoplasmic CCR4-NOT deadenylase and RNA exosome complexes to trigger ARE-containing mRNA deadenylation and decay processes. Interacts with CNOT1. Interacts (via N-terminus) with CNOT6. Interacts with CNOT7; this interaction is inhibited in response to phorbol 12-myristate 13-acetate (PMA) treatment in a p38 MAPK-dependent manner. Interacts with DCP1A. Interacts (via N-terminus) with DCP2. Interacts (via N-terminus) with EXOSC2. Interacts with XRN1. Interacts (via phosphorylated form) with YWHAB; this interaction occurs in a protein kinase AKT1-dependent manner. Interacts (via phosphorylated form) with YWHAZ; this interaction occurs in a p38 MAPK- and AKT-signaling pathways. In terms of processing, phosphorylated. Phosphorylated by RPS6KA1 at Ser-334 upon phorbol 12-myristate 13-acetate (PMA) treatment; this phosphorylation results in dissociation of the CCR4-NOT deadenylase complex and induces p38 MAPK-mediated stabilization of the low-density lipoprotein receptor LDLR mRNA. Phosphorylated by protein kinase AKT1 at Ser-92 and Ser-203 in response to insulin; these phosphorylations stabilize ZFP36L1, increase the association with 14-3-3 proteins and mediate ARE-containing mRNA stabilization. AKT1-mediated phosphorylation at Ser-92 does not impair ARE-containing RNA-binding. Phosphorylated at Ser-54, Ser-92 and Ser-203 by MAPKAPK2; these phosphorylations increase the association with 14-3-3 proteins and mediate ARE-containing mRNA stabilization in a protein kinase AKT1-independent manner. MAPKAPK2-mediated phosphorylations at Ser-54, Ser-92 and Ser-203 do not impair ARE-containing RNA-binding. Phosphorylations increase the association with 14-3-3 proteins and mediate ARE-containing mRNA stabilization during early adipogenesis in a p38 MAPK- and AKT-dependent manner. Phosphorylated by protein kinase AKT1 at Ser-92. Post-translationally, ubiquitinated. Ubiquitination leads to proteasomal degradation, a process inhibited by phosphorylations at Ser-90, Ser-92 and Ser-203.

It localises to the nucleus. It is found in the cytoplasm. The protein resides in the cytoplasmic granule. Its subcellular location is the P-body. Its function is as follows. Zinc-finger RNA-binding protein that destabilizes several cytoplasmic AU-rich element (ARE)-containing mRNA transcripts by promoting their poly(A) tail removal or deadenylation, and hence provide a mechanism for attenuating protein synthesis. Acts as a 3'-untranslated region (UTR) ARE mRNA-binding adapter protein to communicate signaling events to the mRNA decay machinery. Functions by recruiting the CCR4-NOT deadenylase complex and components of the cytoplasmic RNA decay machinery to the bound ARE-containing mRNAs, and hence promotes ARE-mediated mRNA deadenylation and decay processes. Also induces the degradation of ARE-containing mRNAs even in absence of poly(A) tail. Binds to 3'-UTR ARE of numerous mRNAs. Positively regulates early adipogenesis by promoting ARE-mediated mRNA decay of immediate early genes (IEGs). Promotes ARE-mediated mRNA decay of mineralocorticoid receptor NR3C2 mRNA in response to hypertonic stress. Negatively regulates hematopoietic/erythroid cell differentiation by promoting ARE-mediated mRNA decay of the transcription factor STAT5B mRNA. Positively regulates monocyte/macrophage cell differentiation by promoting ARE-mediated mRNA decay of the cyclin-dependent kinase CDK6 mRNA. Promotes degradation of ARE-containing pluripotency-associated mRNAs in embryonic stem cells (ESCs), such as NANOG, through a fibroblast growth factor (FGF)-induced MAPK-dependent signaling pathway, and hence attenuates ESC self-renewal and positively regulates mesendoderm differentiation. May play a role in mediating pro-apoptotic effects in malignant B-cells by promoting ARE-mediated mRNA decay of BCL2 mRNA. In association with ZFP36L2 maintains quiescence on developing B lymphocytes by promoting ARE-mediated decay of several mRNAs encoding cell cycle regulators that help B cells progress through the cell cycle, and hence ensuring accurate variable-diversity-joining (VDJ) recombination and functional immune cell formation. Together with ZFP36L2 is also necessary for thymocyte development and prevention of T-cell acute lymphoblastic leukemia (T-ALL) transformation by promoting ARE-mediated mRNA decay of the oncogenic transcription factor NOTCH1 mRNA. Participates in the delivery of target ARE-mRNAs to processing bodies (PBs). In addition to its cytosolic mRNA-decay function, plays a role in the regulation of nuclear mRNA 3'-end processing; modulates mRNA 3'-end maturation efficiency of the DLL4 mRNA through binding with an ARE embedded in a weak noncanonical polyadenylation (poly(A)) signal in endothelial cells. Also involved in the regulation of stress granule (SG) and P-body (PB) formation and fusion. Plays a role in vasculogenesis and endocardial development. Plays a role in the regulation of keratinocyte proliferation, differentiation and apoptosis. Plays a role in myoblast cell differentiation. The protein is mRNA decay activator protein ZFP36L1 of Rattus norvegicus (Rat).